The following is a 241-amino-acid chain: GTP cyclohydrolase III (241 aa).

Belongs to the archaeal-type GTP cyclohydrolase family.

The enzyme catalyses GTP + 3 H2O = 2-amino-5-formylamino-6-(5-phospho-D-ribosylamino)pyrimidin-4(3H)-one + 2 phosphate + 2 H(+). Functionally, catalyzes the formation of 2-amino-5-formylamino-6-ribofuranosylamino-4(3H)-pyrimidinone ribonucleotide monophosphate and inorganic phosphate from GTP. Also has an independent pyrophosphate phosphohydrolase activity. This is GTP cyclohydrolase III from Aeropyrum pernix (strain ATCC 700893 / DSM 11879 / JCM 9820 / NBRC 100138 / K1).